Reading from the N-terminus, the 624-residue chain is ABC transporter G family member 23 (624 aa).

The ABC transporter domain occupies 52–296 (LTVTNLSYTI…IAKLGFQIPE (245 aa)). 84 to 91 (GPSGTGKS) contributes to the ATP binding site. The 211-residue stretch at 350-560 (TEISYLCSRF…PLESMVVNEY (211 aa)) folds into the ABC transmembrane type-2 domain. A run of 6 helical transmembrane segments spans residues 369–389 (LFLA…SVYT), 402–422 (LGLF…ALPI), 450–470 (IAFV…VYWI), 480–500 (FSFF…LVLF), 511–531 (GNSL…YFIP), and 595–615 (INVG…WGIL).

The protein belongs to the ABC transporter superfamily. ABCG family. Eye pigment precursor importer (TC 3.A.1.204) subfamily.

The protein localises to the membrane. The protein is ABC transporter G family member 23 (ABCG23) of Arabidopsis thaliana (Mouse-ear cress).